The sequence spans 517 residues: Gamma-1-syntrophin (517 aa).

The region spanning 57–140 (TVTIRRQTVG…EVTLTVSFLK (84 aa)) is the PDZ domain. The PH domain occupies 283-390 (QIVYMGWCEA…WERAFQTATF (108 aa)).

The protein belongs to the syntrophin family. In terms of assembly, interacts with the dystrophin protein DMD and related proteins DTNA and DTNB. Interacts with DGKZ.

The protein resides in the cytoplasm. It is found in the cytoskeleton. Its subcellular location is the nucleus. Adapter protein that binds to and probably organizes the subcellular localization of a variety of proteins. May link various receptors to the actin cytoskeleton and the dystrophin glycoprotein complex. May participate in regulating the subcellular location of diacylglycerol kinase-zeta to ensure that diacylglycerol is rapidly inactivated following receptor activation. This Mus musculus (Mouse) protein is Gamma-1-syntrophin (Sntg1).